The chain runs to 227 residues: [D-Ala2]-deltorphins (227 aa).

The N-terminal stretch at 1–20 (MSFLKKSLLLVLFLGLVSHS) is a signal peptide. Residues 21 to 46 (VCKEEKRETEEENENEEENHEVGSEM) constitute a propeptide that is removed on maturation. The disordered stretch occupies residues 22–227 (CKEEKRETEE…DVVGGEAKKM (206 aa)). A compositionally biased stretch (acidic residues) spans 30–39 (EEENENEEEN). A D-alanine (Ala) modification is found at A50. Residues 57-75 (DTEEKNENEEENQEEGSEM) constitute a propeptide that is removed on maturation. A compositionally biased stretch (acidic residues) spans 62–72 (NENEEENQEEG). Residues 73-87 (SEMKRYAFGYPKREP) show a composition bias toward basic and acidic residues. At A79 the chain carries D-alanine (Ala). The propeptide occupies 86–104 (EPEEENENEEENHEEGSEM). Residues 88 to 98 (EEENENEEENH) show a composition bias toward acidic residues. Over residues 99–108 (EEGSEMKRYA) the composition is skewed to basic and acidic residues. A108 carries the D-alanine (Ala) modification. At G113 the chain carries Glycine amide. A propeptide spanning residues 115 to 140 (EAKKMKREPEEENENEEENHEEGSEM) is cleaved from the precursor. Residues 124-134 (EEENENEEENH) are compositionally biased toward acidic residues. The segment covering 135-144 (EEGSEMKRYA) has biased composition (basic and acidic residues). A144 carries the D-alanine (Ala) modification. Glycine amide is present on G149. Residues 151 to 176 (EAKKMKREPEEENENEEENHEEGSEM) constitute a propeptide that is removed on maturation. Residues 160-170 (EEENENEEENH) are compositionally biased toward acidic residues. Positions 171–180 (EEGSEMKRYA) are enriched in basic and acidic residues. Position 180 is a D-alanine (Ala) (A180). G185 is modified (glycine amide). Positions 187-212 (EAKKMKREPEEENENEEENHEEGSEM) are excised as a propeptide. Positions 196-206 (EEENENEEENH) are enriched in acidic residues. A compositionally biased stretch (basic and acidic residues) spans 207–216 (EEGSEMKRYA). Position 216 is a D-alanine (Ala) (A216). Position 221 is a glycine amide (G221). The propeptide occupies 223–227 (EAKKM).

It belongs to the frog skin active peptide (FSAP) family. Dermorphin subfamily. Expressed by the skin glands.

Its subcellular location is the secreted. Deltorphin is a heptapeptide with a very potent opiate-like activity. Has high affinity and selectivity for delta-type opioid receptors. The two dermorphin-like peptides have a similar affinity and selectivity for the mu opioid receptor as dermorphin. The protein is [D-Ala2]-deltorphins of Phyllomedusa bicolor (Two-colored leaf frog).